The primary structure comprises 679 residues: UvrABC system protein B (679 aa).

One can recognise a Helicase ATP-binding domain in the interval 25-176 (KGVNTGKEFQ…NLRSYLRSLV (152 aa)). ATP is bound at residue 38–45 (GATGTGKT). The short motif at 91 to 114 (YYDYYQPEAYVPVSDTYIAKTASI) is the Beta-hairpin element. The region spanning 429–583 (QIEDLLSEIR…KKYNQVNGIT (155 aa)) is the Helicase C-terminal domain. One can recognise a UVR domain in the interval 639-674 (PDLIEKLEIKMKDAAKELNFEEAANLRDRIKKLRQK).

It belongs to the UvrB family. Forms a heterotetramer with UvrA during the search for lesions. Interacts with UvrC in an incision complex.

It is found in the cytoplasm. Functionally, the UvrABC repair system catalyzes the recognition and processing of DNA lesions. A damage recognition complex composed of 2 UvrA and 2 UvrB subunits scans DNA for abnormalities. Upon binding of the UvrA(2)B(2) complex to a putative damaged site, the DNA wraps around one UvrB monomer. DNA wrap is dependent on ATP binding by UvrB and probably causes local melting of the DNA helix, facilitating insertion of UvrB beta-hairpin between the DNA strands. Then UvrB probes one DNA strand for the presence of a lesion. If a lesion is found the UvrA subunits dissociate and the UvrB-DNA preincision complex is formed. This complex is subsequently bound by UvrC and the second UvrB is released. If no lesion is found, the DNA wraps around the other UvrB subunit that will check the other stand for damage. This chain is UvrABC system protein B, found in Prochlorococcus marinus (strain MIT 9301).